We begin with the raw amino-acid sequence, 76 residues long: ATP synthase subunit 9, mitochondrial (76 aa).

A run of 2 helical transmembrane segments spans residues 14–34 (ISTIGLIGAGIGIGIVFAALI) and 56–76 (ALSEATGLFCLMISFMLLFAV).

The protein belongs to the ATPase C chain family. In terms of assembly, F-type ATPases have 2 components, CF(1) - the catalytic core - and CF(0) - the membrane proton channel. CF(1) has five subunits: alpha(3), beta(3), gamma(1), delta(1), epsilon(1). CF(0) has three main subunits: a, b and c.

Its subcellular location is the mitochondrion membrane. Mitochondrial membrane ATP synthase (F(1)F(0) ATP synthase or Complex V) produces ATP from ADP in the presence of a proton gradient across the membrane which is generated by electron transport complexes of the respiratory chain. F-type ATPases consist of two structural domains, F(1) - containing the extramembraneous catalytic core and F(0) - containing the membrane proton channel, linked together by a central stalk and a peripheral stalk. During catalysis, ATP synthesis in the catalytic domain of F(1) is coupled via a rotary mechanism of the central stalk subunits to proton translocation. Part of the complex F(0) domain. A homomeric c-ring of probably 10 subunits is part of the complex rotary element. This Candida glabrata (strain ATCC 2001 / BCRC 20586 / JCM 3761 / NBRC 0622 / NRRL Y-65 / CBS 138) (Yeast) protein is ATP synthase subunit 9, mitochondrial (ATP9).